We begin with the raw amino-acid sequence, 79 residues long: Cytochrome b (79 aa).

3 consecutive transmembrane segments (helical) span residues 1-7, 31-52, and 67-79; these read SALFLAM, WLIR…YLHI, and WNIG…LTMA. Residues H37 and H51 each coordinate heme b.

It belongs to the cytochrome b family. In terms of assembly, the cytochrome bc1 complex contains 11 subunits: 3 respiratory subunits (MT-CYB, CYC1 and UQCRFS1), 2 core proteins (UQCRC1 and UQCRC2) and 6 low-molecular weight proteins (UQCRH/QCR6, UQCRB/QCR7, UQCRQ/QCR8, UQCR10/QCR9, UQCR11/QCR10 and a cleavage product of UQCRFS1). This cytochrome bc1 complex then forms a dimer. Heme b serves as cofactor.

It is found in the mitochondrion inner membrane. In terms of biological role, component of the ubiquinol-cytochrome c reductase complex (complex III or cytochrome b-c1 complex) that is part of the mitochondrial respiratory chain. The b-c1 complex mediates electron transfer from ubiquinol to cytochrome c. Contributes to the generation of a proton gradient across the mitochondrial membrane that is then used for ATP synthesis. This chain is Cytochrome b (MT-CYB), found in Dipodomys panamintinus (Panamint kangaroo rat).